We begin with the raw amino-acid sequence, 381 residues long: Chorismate synthase (381 aa).

Residues arginine 41 and arginine 47 each coordinate NADP(+). FMN is bound by residues 127–129 (RAS), 247–248 (QA), glycine 291, 306–310 (KPIPT), and arginine 332.

Belongs to the chorismate synthase family. Homotetramer. Requires FMNH2 as cofactor.

The catalysed reaction is 5-O-(1-carboxyvinyl)-3-phosphoshikimate = chorismate + phosphate. It participates in metabolic intermediate biosynthesis; chorismate biosynthesis; chorismate from D-erythrose 4-phosphate and phosphoenolpyruvate: step 7/7. Its function is as follows. Catalyzes the anti-1,4-elimination of the C-3 phosphate and the C-6 proR hydrogen from 5-enolpyruvylshikimate-3-phosphate (EPSP) to yield chorismate, which is the branch point compound that serves as the starting substrate for the three terminal pathways of aromatic amino acid biosynthesis. This reaction introduces a second double bond into the aromatic ring system. The chain is Chorismate synthase from Anaeromyxobacter dehalogenans (strain 2CP-C).